Here is a 473-residue protein sequence, read N- to C-terminus: Photosystem II CP43 reaction center protein (473 aa).

Residues 1 to 14 constitute a propeptide that is removed on maturation; that stretch reads MKTLYSLRRSYPVE. Thr15 carries the N-acetylthreonine modification. Phosphothreonine is present on Thr15. The next 5 helical transmembrane spans lie at 69-93, 134-155, 178-200, 255-275, and 291-312; these read LFEV…PHLA, LIGP…KDRN, KALY…RKIT, KPFA…LSYS, and WFNN…ASQA. [CaMn4O5] cluster is bound at residue Glu367. A helical membrane pass occupies residues 447–471; that stretch reads RARAAAAGFEKGIDRDFEPVLSMTP.

It belongs to the PsbB/PsbC family. PsbC subfamily. In terms of assembly, PSII is composed of 1 copy each of membrane proteins PsbA, PsbB, PsbC, PsbD, PsbE, PsbF, PsbH, PsbI, PsbJ, PsbK, PsbL, PsbM, PsbT, PsbX, PsbY, PsbZ, Psb30/Ycf12, at least 3 peripheral proteins of the oxygen-evolving complex and a large number of cofactors. It forms dimeric complexes. Requires Binds multiple chlorophylls and provides some of the ligands for the Ca-4Mn-5O cluster of the oxygen-evolving complex. It may also provide a ligand for a Cl- that is required for oxygen evolution. PSII binds additional chlorophylls, carotenoids and specific lipids. as cofactor.

It is found in the plastid. The protein resides in the chloroplast thylakoid membrane. In terms of biological role, one of the components of the core complex of photosystem II (PSII). It binds chlorophyll and helps catalyze the primary light-induced photochemical processes of PSII. PSII is a light-driven water:plastoquinone oxidoreductase, using light energy to abstract electrons from H(2)O, generating O(2) and a proton gradient subsequently used for ATP formation. The protein is Photosystem II CP43 reaction center protein of Pinus thunbergii (Japanese black pine).